A 208-amino-acid chain; its full sequence is Histone 24 (208 aa).

At serine 2 the chain carries N-acetylserine. Lysine 14 carries the N6-methyllysine modification. The H15 domain maps to 37–113 (AHPPYINMIK…GANGRFRVPE (77 aa)). The disordered stretch occupies residues 101-208 (AGSGANGRFR…KKAAKPAAKA (108 aa)). Over residues 114-138 (KAAAAKKPAAAKKPAAAKKPAAAKK) the composition is skewed to low complexity. Basic residues-rich tracts occupy residues 144–155 (KAKKPAAAKPKK) and 162–202 (KVKK…KKAA).

The protein belongs to the histone H1/H5 family. Interacts with nmad-1. Interacts (when monomethylated at Lys-14) with chromobox protein homolog hpl-1; the interaction is direct. Interacts (when monomethylated at Lys-14) with histone H3 (when trimethylated on 'Lys-27'); the interaction is direct. In terms of processing, methylation at lysine 14 is necessary to regulate male tail development.

It localises to the nucleus. Its subcellular location is the chromosome. The protein resides in the cytoplasm. Functionally, histones H1 are necessary for the condensation of nucleosome chains into higher-order structures. Probably does not act as global transcriptional repressor. Acting in concert with chromobox protein homologs hpl-1 and hpl-2, involved in reproduction, somatic gonad development, male tail development, and vulval cell fate decisions; perhaps as a result of modulating expression of Hox genes mab-5 and egl-5. Plays a role in linking epigenetic regulation with the innate immune response. This Caenorhabditis elegans protein is Histone 24.